Reading from the N-terminus, the 965-residue chain is Aminopeptidase N (965 aa).

Over 1–8 the chain is Cytoplasmic; sequence MAKGFYIS. The chain crosses the membrane as a helical; Signal-anchor for type II membrane protein span at residues 9–32; sequence KALGILAILLGVAAVATIIALSVV. The cytosolic Ser/Thr-rich junction stretch occupies residues 33-65; the sequence is YAQEKNKNAERGTAAPTSPTGPTTTSATTLDQS. The Extracellular segment spans residues 33–965; the sequence is YAQEKNKNAE…VVLNWFKDHS (933 aa). A disordered region spans residues 40 to 65; the sequence is NAERGTAAPTSPTGPTTTSATTLDQS. Positions 44–61 are enriched in low complexity; sequence GTAAPTSPTGPTTTSATT. The metalloprotease stretch occupies residues 66–965; sequence KPWNRYRLPT…VVLNWFKDHS (900 aa). N-linked (GlcNAc...) asparagine glycosylation is present at Asn125. Tyr173 bears the Sulfotyrosine mark. Residues Asn231, Asn260, and Asn316 are each glycosylated (N-linked (GlcNAc...) asparagine). 349–353 contacts substrate; it reads GAMEN. His385 provides a ligand contact to Zn(2+). Catalysis depends on Glu386, which acts as the Proton acceptor. Residues His389 and Glu408 each coordinate Zn(2+). Residue Tyr416 is modified to Sulfotyrosine. N-linked (GlcNAc...) asparagine glycosylation is found at Asn508, Asn569, Asn624, Asn680, Asn734, and Asn738. 2 disulfides stabilise this stretch: Cys760-Cys767 and Cys797-Cys833.

Belongs to the peptidase M1 family. In terms of assembly, homodimer. Interacts with SLC6A19. The cofactor is Zn(2+). In terms of processing, sulfated. N- and O-glycosylated. Post-translationally, may undergo proteolysis and give rise to a soluble form.

Its subcellular location is the cell membrane. The enzyme catalyses Release of an N-terminal amino acid, Xaa-|-Yaa- from a peptide, amide or arylamide. Xaa is preferably Ala, but may be most amino acids including Pro (slow action). When a terminal hydrophobic residue is followed by a prolyl residue, the two may be released as an intact Xaa-Pro dipeptide.. In terms of biological role, broad specificity aminopeptidase which plays a role in the final digestion of peptides generated from hydrolysis of proteins by gastric and pancreatic proteases. Also involved in the processing of various peptides including peptide hormones, such as angiotensin III and IV, neuropeptides, and chemokines. May also be involved the cleavage of peptides bound to major histocompatibility complex class II molecules of antigen presenting cells. May have a role in angiogenesis and promote cholesterol crystallization. May have a role in amino acid transport by acting as binding partner of amino acid transporter SLC6A19 and regulating its activity. The polypeptide is Aminopeptidase N (ANPEP) (Bos taurus (Bovine)).